The sequence spans 393 residues: Venom metalloproteinase BumaMPs1 (393 aa).

Residues 1–15 form the signal peptide; sequence MFVHLLVLLFAAVEA. N158 carries N-linked (GlcNAc...) asparagine glycosylation. One can recognise a Peptidase M12B domain in the interval 167 to 377; the sequence is KCVKIEYVFV…RVEELITRRK (211 aa). Residue H323 participates in Zn(2+) binding. E324 is an active-site residue. The Zn(2+) site is built by H327 and H333. Residues 378 to 393 form a disintegrin-like domain region; sequence INHCIVETCDGKRKRN.

Belongs to the venom metalloproteinase (M12B) family. It depends on Zn(2+) as a cofactor. Contains several disulfide bonds. Expressed by the venom gland.

Its subcellular location is the secreted. Metalloprotease. The polypeptide is Venom metalloproteinase BumaMPs1 (Olivierus martensii (Manchurian scorpion)).